A 628-amino-acid polypeptide reads, in one-letter code: DNA ligase (628 aa).

NAD(+) contacts are provided by residues 36–40 (DVEYD), 85–86 (SL), and Glu-117. Lys-119 acts as the N6-AMP-lysine intermediate in catalysis. 4 residues coordinate NAD(+): Arg-140, Glu-174, Lys-309, and Lys-333. Positions 427, 430, 446, and 452 each coordinate Zn(2+).

It belongs to the NAD-dependent DNA ligase family. LigA subfamily. Mg(2+) is required as a cofactor. It depends on Mn(2+) as a cofactor.

The enzyme catalyses NAD(+) + (deoxyribonucleotide)n-3'-hydroxyl + 5'-phospho-(deoxyribonucleotide)m = (deoxyribonucleotide)n+m + AMP + beta-nicotinamide D-nucleotide.. Its function is as follows. DNA ligase that catalyzes the formation of phosphodiester linkages between 5'-phosphoryl and 3'-hydroxyl groups in double-stranded DNA using NAD as a coenzyme and as the energy source for the reaction. It is essential for DNA replication and repair of damaged DNA. This Tropheryma whipplei (strain Twist) (Whipple's bacillus) protein is DNA ligase.